Here is a 131-residue protein sequence, read N- to C-terminus: Holo-[acyl-carrier-protein] synthase (131 aa).

Mg(2+) contacts are provided by aspartate 8 and glutamate 63.

It belongs to the P-Pant transferase superfamily. AcpS family. Requires Mg(2+) as cofactor.

It localises to the cytoplasm. The catalysed reaction is apo-[ACP] + CoA = holo-[ACP] + adenosine 3',5'-bisphosphate + H(+). In terms of biological role, transfers the 4'-phosphopantetheine moiety from coenzyme A to a Ser of acyl-carrier-protein. The chain is Holo-[acyl-carrier-protein] synthase from Shewanella halifaxensis (strain HAW-EB4).